The following is a 412-amino-acid chain: Putative competence-damage inducible protein (412 aa).

It belongs to the CinA family.

In Bacillus cereus (strain B4264), this protein is Putative competence-damage inducible protein.